A 487-amino-acid polypeptide reads, in one-letter code: 3-octaprenyl-4-hydroxybenzoate carboxy-lyase (487 aa).

Asn172 contributes to the Mn(2+) binding site. Prenylated FMN-binding positions include 175 to 177 (IYR), 189 to 191 (RWL), and 194 to 195 (RG). Mn(2+) is bound at residue Glu238. The active-site Proton donor is the Asp287.

This sequence belongs to the UbiD family. Homohexamer. The cofactor is prenylated FMN. Mn(2+) serves as cofactor.

The protein localises to the cell membrane. It catalyses the reaction a 4-hydroxy-3-(all-trans-polyprenyl)benzoate + H(+) = a 2-(all-trans-polyprenyl)phenol + CO2. It participates in cofactor biosynthesis; ubiquinone biosynthesis. Functionally, catalyzes the decarboxylation of 3-octaprenyl-4-hydroxy benzoate to 2-octaprenylphenol, an intermediate step in ubiquinone biosynthesis. In Nitrosomonas eutropha (strain DSM 101675 / C91 / Nm57), this protein is 3-octaprenyl-4-hydroxybenzoate carboxy-lyase.